Here is a 604-residue protein sequence, read N- to C-terminus: BTB/POZ domain-containing protein SR1IP1 (604 aa).

The 70-residue stretch at 27–96 (SDVTVHVGEA…CYGINFDMST (70 aa)) folds into the BTB domain. The NPH3 domain occupies 201–474 (DWWAEDLTVL…VQVLYYEQQR (274 aa)). Phosphotyrosine is present on tyrosine 415. Disordered regions lie at residues 478–499 (EVTN…VLPP) and 532–604 (FEKE…HSIS). Positions 500-541 (KLSSYTDELSKLKRENQDLKLELLKMKMKLKEFEKESEKKTS) form a coiled coil. The segment covering 541–558 (SSSTISTNPSSPISTAST) has biased composition (low complexity). Positions 591–604 (GRTKPPKDRRHSIS) are enriched in basic residues.

It belongs to the NPH3 family. In terms of assembly, interacts with CAMTA3 and CUL3A.

It functions in the pathway protein modification; protein ubiquitination. Acts as a substrate-specific adapter of an E3 ubiquitin-protein ligase complex (CUL3-RBX1-BTB) which mediates the ubiquitination and subsequent proteasomal degradation of target proteins. Involved in disease resistance. Acts as a substrate adapter that recruits CAMTA3/SR1 for ubiquitination and degradation during pathogen infection. Acts as a positive regulator of plant defense by removing the defense suppressor CAMTA3/SR1. The polypeptide is BTB/POZ domain-containing protein SR1IP1 (Arabidopsis thaliana (Mouse-ear cress)).